The sequence spans 312 residues: 4-diphosphocytidyl-2-C-methyl-D-erythritol kinase (312 aa).

Lys16 is a catalytic residue. 101–111 (PIGAGLAGGSS) contributes to the ATP binding site. Residue Asp143 is part of the active site.

This sequence belongs to the GHMP kinase family. IspE subfamily.

It carries out the reaction 4-CDP-2-C-methyl-D-erythritol + ATP = 4-CDP-2-C-methyl-D-erythritol 2-phosphate + ADP + H(+). The protein operates within isoprenoid biosynthesis; isopentenyl diphosphate biosynthesis via DXP pathway; isopentenyl diphosphate from 1-deoxy-D-xylulose 5-phosphate: step 3/6. Its function is as follows. Catalyzes the phosphorylation of the position 2 hydroxy group of 4-diphosphocytidyl-2C-methyl-D-erythritol. The sequence is that of 4-diphosphocytidyl-2-C-methyl-D-erythritol kinase from Prochlorococcus marinus subsp. pastoris (strain CCMP1986 / NIES-2087 / MED4).